Here is a 64-residue protein sequence, read N- to C-terminus: Large ribosomal subunit protein bL35 (64 aa).

2 disordered regions span residues Met-1–Ile-22 and Glu-34–Gly-64. A compositionally biased stretch (basic and acidic residues) spans Glu-34–Gly-46. The span at Val-50–Gly-64 shows a compositional bias: polar residues.

It belongs to the bacterial ribosomal protein bL35 family.

This Mycolicibacterium paratuberculosis (strain ATCC BAA-968 / K-10) (Mycobacterium paratuberculosis) protein is Large ribosomal subunit protein bL35.